The following is a 471-amino-acid chain: Heparan-sulfate 6-O-sulfotransferase 3 (471 aa).

Residues 1 to 4 (MDER) are Cytoplasmic-facing. A helical; Signal-anchor for type II membrane protein membrane pass occupies residues 5–27 (FNKWLLTPVLTLLFVVIMYQYVS). Over 28 to 471 (PSCTSSCTNF…EDYNSQVVRW (444 aa)) the chain is Lumenal. Residues 39–122 (EQPRAGEAGP…EAPENGSLPR (84 aa)) are disordered. Positions 41 to 62 (PRAGEAGPPAVPGPARRAQAPP) are enriched in low complexity. Over residues 70–81 (QLPPPPRGPPEG) the composition is skewed to pro residues. Residues 88 to 114 (PEEEDEEPGDPREGEEEEEEDEPDPEA) show a composition bias toward acidic residues. N-linked (GlcNAc...) asparagine glycosylation is found at N117 and N128. 152–160 (HIQKTGGTT) serves as a coordination point for 3'-phosphoadenylyl sulfate. Residues 182 to 183 (KK), R199, W204, and H209 contribute to the substrate site. Residue H209 is the Proton acceptor of the active site. N231 is a glycosylation site (N-linked (GlcNAc...) asparagine). Positions 245 and 253 each coordinate 3'-phosphoadenylyl sulfate. Positions 257 and 264 each coordinate substrate. N-linked (GlcNAc...) asparagine glycans are attached at residues N324 and N329. 3'-phosphoadenylyl sulfate is bound at residue 377-379 (TQF). N380 carries N-linked (GlcNAc...) asparagine glycosylation. 383–384 (RA) is a 3'-phosphoadenylyl sulfate binding site. Residues 422 to 471 (TKQLEHQRDRQKRREERRLQREHRDHQWPKEDGAAEGTVTEDYNSQVVRW) are disordered. Basic and acidic residues predominate over residues 423 to 454 (KQLEHQRDRQKRREERRLQREHRDHQWPKEDG). The segment covering 462-471 (EDYNSQVVRW) has biased composition (polar residues).

Belongs to the sulfotransferase 6 family.

Its subcellular location is the membrane. It carries out the reaction alpha-D-glucosaminyl-[heparan sulfate](n) + 3'-phosphoadenylyl sulfate = 6-sulfo-alpha-D-glucosaminyl-[heparan sulfate](n) + adenosine 3',5'-bisphosphate + H(+). In terms of biological role, 6-O-sulfation enzyme which catalyzes the transfer of sulfate from 3'-phosphoadenosine 5'-phosphosulfate (PAPS) to position 6 of the N-sulfoglucosamine residue (GlcNS) of heparan sulfate. This chain is Heparan-sulfate 6-O-sulfotransferase 3 (HS6ST3), found in Homo sapiens (Human).